We begin with the raw amino-acid sequence, 951 residues long: Bifunctional glutamine synthetase adenylyltransferase/adenylyl-removing enzyme (951 aa).

The interval 1-440 (MLPLPSELQI…VFDDLIGDET (440 aa)) is adenylyl removase. The segment at 449 to 951 (HGLYKSLWQD…WLAANDANVS (503 aa)) is adenylyl transferase.

The protein belongs to the GlnE family. Mg(2+) serves as cofactor.

The catalysed reaction is [glutamine synthetase]-O(4)-(5'-adenylyl)-L-tyrosine + phosphate = [glutamine synthetase]-L-tyrosine + ADP. It catalyses the reaction [glutamine synthetase]-L-tyrosine + ATP = [glutamine synthetase]-O(4)-(5'-adenylyl)-L-tyrosine + diphosphate. Its function is as follows. Involved in the regulation of glutamine synthetase GlnA, a key enzyme in the process to assimilate ammonia. When cellular nitrogen levels are high, the C-terminal adenylyl transferase (AT) inactivates GlnA by covalent transfer of an adenylyl group from ATP to specific tyrosine residue of GlnA, thus reducing its activity. Conversely, when nitrogen levels are low, the N-terminal adenylyl removase (AR) activates GlnA by removing the adenylyl group by phosphorolysis, increasing its activity. The regulatory region of GlnE binds the signal transduction protein PII (GlnB) which indicates the nitrogen status of the cell. The chain is Bifunctional glutamine synthetase adenylyltransferase/adenylyl-removing enzyme from Yersinia pestis bv. Antiqua (strain Antiqua).